We begin with the raw amino-acid sequence, 159 residues long: Protein-export protein SecB (159 aa).

It belongs to the SecB family. In terms of assembly, homotetramer, a dimer of dimers. One homotetramer interacts with 1 SecA dimer.

The protein resides in the cytoplasm. In terms of biological role, one of the proteins required for the normal export of preproteins out of the cell cytoplasm. It is a molecular chaperone that binds to a subset of precursor proteins, maintaining them in a translocation-competent state. It also specifically binds to its receptor SecA. This Nitrobacter winogradskyi (strain ATCC 25391 / DSM 10237 / CIP 104748 / NCIMB 11846 / Nb-255) protein is Protein-export protein SecB.